The chain runs to 206 residues: Interleukin-24 (206 aa).

The signal sequence occupies residues 1 to 51 (MNFQQRLQSLWTLARPFCPPLLATASQMQMVVLPCLGFTLLLWSQVSGAQG). Cysteine 59 and cysteine 106 are oxidised to a cystine. N-linked (GlcNAc...) asparagine glycans are attached at residues asparagine 85 and asparagine 99. Lysine 122 is covalently cross-linked (Glycyl lysine isopeptide (Lys-Gly) (interchain with G-Cter in ubiquitin)). The N-linked (GlcNAc...) asparagine glycan is linked to asparagine 126.

The protein belongs to the IL-10 family. Glycosylated. Post-translationally, ubiquitination at Lys-122 promotes proteasomal degradation. In terms of tissue distribution, up-regulated in melanoma cells induced to terminally differentiate.

It is found in the secreted. Its function is as follows. Multifunctional cytokine mainly produced by T-cells that plays a regulatory role in immune response, tissue homeostasis, host defense, and oncogenesis. Possesses antiviral functions and induces the type I interferon response during influenza infection. Signals through two receptor complexes IL20RA/IL20RB or IL20RB/IL22RA1. In turn, stimulates the JAK1-STAT3 and MAPK pathways and promotes the secretion of pro-inflammatory mediators including IL8 and MMP1. Intracellularly, maintains endoplasmic reticulum homeostasis by restricting the eIF2alpha-CHOP pathway-mediated stress signal. In addition, acts as a quality control mechanism for the ubiquitin proteasome system by alerting the cell to proteasome dysfunction through activation of PKR/EIF2AK2. The polypeptide is Interleukin-24 (IL24) (Homo sapiens (Human)).